Reading from the N-terminus, the 465-residue chain is Methylenetetrahydrofolate--tRNA-(uracil-5-)-methyltransferase TrmFO (465 aa).

3-8 (GAGLAG) serves as a coordination point for FAD.

The protein belongs to the MnmG family. TrmFO subfamily. FAD is required as a cofactor.

It is found in the cytoplasm. The catalysed reaction is uridine(54) in tRNA + (6R)-5,10-methylene-5,6,7,8-tetrahydrofolate + NADH + H(+) = 5-methyluridine(54) in tRNA + (6S)-5,6,7,8-tetrahydrofolate + NAD(+). It carries out the reaction uridine(54) in tRNA + (6R)-5,10-methylene-5,6,7,8-tetrahydrofolate + NADPH + H(+) = 5-methyluridine(54) in tRNA + (6S)-5,6,7,8-tetrahydrofolate + NADP(+). In terms of biological role, catalyzes the folate-dependent formation of 5-methyl-uridine at position 54 (M-5-U54) in all tRNAs. The sequence is that of Methylenetetrahydrofolate--tRNA-(uracil-5-)-methyltransferase TrmFO from Bradyrhizobium sp. (strain BTAi1 / ATCC BAA-1182).